A 1576-amino-acid chain; its full sequence is Pentafunctional AROM polypeptide (1576 aa).

Residues Met-1 to Asp-387 form a 3-dehydroquinate synthase region. NAD(+) contacts are provided by residues Asp-49–Asn-51, Glu-86–Lys-89, Gly-117–Val-119, and Asp-122. Arg-133 serves as a coordination point for 7-phospho-2-dehydro-3-deoxy-D-arabino-heptonate. An NAD(+)-binding site is contributed by Thr-142–Thr-143. Asp-149 and Lys-155 together coordinate 7-phospho-2-dehydro-3-deoxy-D-arabino-heptonate. Lys-164 serves as a coordination point for NAD(+). A 7-phospho-2-dehydro-3-deoxy-D-arabino-heptonate-binding site is contributed by Asn-165. NAD(+) contacts are provided by residues Phe-182–Thr-185 and Asn-193. Glu-197 contributes to the Zn(2+) binding site. 7-phospho-2-dehydro-3-deoxy-D-arabino-heptonate is bound by residues Glu-197 to Lys-200 and Lys-253. Catalysis depends on Glu-263, which acts as the Proton acceptor; for 3-dehydroquinate synthase activity. Residues Arg-267–Asn-271 and His-274 contribute to the 7-phospho-2-dehydro-3-deoxy-D-arabino-heptonate site. His-274 is a Zn(2+) binding site. His-278 (proton acceptor; for 3-dehydroquinate synthase activity) is an active-site residue. His-290 and Lys-359 together coordinate 7-phospho-2-dehydro-3-deoxy-D-arabino-heptonate. Zn(2+) is bound at residue His-290. Residues Val-400 to Val-841 are EPSP synthase. The For EPSP synthase activity role is filled by Cys-823. The segment at Asp-863–Ser-1055 is shikimate kinase. Position 870–877 (Gly-870–Thr-877) interacts with ATP. Residues Leu-1056–Glu-1276 are 3-dehydroquinase. His-1179 (proton acceptor; for 3-dehydroquinate dehydratase activity) is an active-site residue. Residue Lys-1207 is the Schiff-base intermediate with substrate; for 3-dehydroquinate dehydratase activity of the active site. The interval Pro-1289–Ala-1576 is shikimate dehydrogenase.

It in the N-terminal section; belongs to the sugar phosphate cyclases superfamily. Dehydroquinate synthase family. This sequence in the 2nd section; belongs to the EPSP synthase family. The protein in the 3rd section; belongs to the shikimate kinase family. In the 4th section; belongs to the type-I 3-dehydroquinase family. It in the C-terminal section; belongs to the shikimate dehydrogenase family. In terms of assembly, homodimer. Zn(2+) is required as a cofactor.

It localises to the cytoplasm. The catalysed reaction is 7-phospho-2-dehydro-3-deoxy-D-arabino-heptonate = 3-dehydroquinate + phosphate. The enzyme catalyses 3-dehydroquinate = 3-dehydroshikimate + H2O. It catalyses the reaction shikimate + NADP(+) = 3-dehydroshikimate + NADPH + H(+). It carries out the reaction shikimate + ATP = 3-phosphoshikimate + ADP + H(+). The catalysed reaction is 3-phosphoshikimate + phosphoenolpyruvate = 5-O-(1-carboxyvinyl)-3-phosphoshikimate + phosphate. It functions in the pathway metabolic intermediate biosynthesis; chorismate biosynthesis; chorismate from D-erythrose 4-phosphate and phosphoenolpyruvate: step 2/7. Its pathway is metabolic intermediate biosynthesis; chorismate biosynthesis; chorismate from D-erythrose 4-phosphate and phosphoenolpyruvate: step 3/7. The protein operates within metabolic intermediate biosynthesis; chorismate biosynthesis; chorismate from D-erythrose 4-phosphate and phosphoenolpyruvate: step 4/7. It participates in metabolic intermediate biosynthesis; chorismate biosynthesis; chorismate from D-erythrose 4-phosphate and phosphoenolpyruvate: step 5/7. It functions in the pathway metabolic intermediate biosynthesis; chorismate biosynthesis; chorismate from D-erythrose 4-phosphate and phosphoenolpyruvate: step 6/7. The AROM polypeptide catalyzes 5 consecutive enzymatic reactions in prechorismate polyaromatic amino acid biosynthesis. The polypeptide is Pentafunctional AROM polypeptide (Sclerotinia sclerotiorum (strain ATCC 18683 / 1980 / Ss-1) (White mold)).